The sequence spans 669 residues: DNA ligase (669 aa).

Residues 33-37 (DLTYD), 82-83 (SL), and Glu115 contribute to the NAD(+) site. The N6-AMP-lysine intermediate role is filled by Lys117. Residues Arg138, Glu172, Lys286, and Lys310 each coordinate NAD(+). The Zn(2+) site is built by Cys401, Cys404, Cys417, and Cys422.

Belongs to the NAD-dependent DNA ligase family. LigA subfamily. Requires Mg(2+) as cofactor. The cofactor is Mn(2+).

The enzyme catalyses NAD(+) + (deoxyribonucleotide)n-3'-hydroxyl + 5'-phospho-(deoxyribonucleotide)m = (deoxyribonucleotide)n+m + AMP + beta-nicotinamide D-nucleotide.. DNA ligase that catalyzes the formation of phosphodiester linkages between 5'-phosphoryl and 3'-hydroxyl groups in double-stranded DNA using NAD as a coenzyme and as the energy source for the reaction. It is essential for DNA replication and repair of damaged DNA. The protein is DNA ligase of Borrelia hermsii (strain HS1 / DAH).